The following is a 208-amino-acid chain: Uracil phosphoribosyltransferase (208 aa).

5-phospho-alpha-D-ribose 1-diphosphate-binding positions include R78, R103, and 130–138; that span reads DPMLATGGT. Residues I193 and 198 to 200 each bind uracil; that span reads GDA. D199 lines the 5-phospho-alpha-D-ribose 1-diphosphate pocket.

Belongs to the UPRTase family. Mg(2+) is required as a cofactor.

The enzyme catalyses UMP + diphosphate = 5-phospho-alpha-D-ribose 1-diphosphate + uracil. It participates in pyrimidine metabolism; UMP biosynthesis via salvage pathway; UMP from uracil: step 1/1. Its activity is regulated as follows. Allosterically activated by GTP. Its function is as follows. Catalyzes the conversion of uracil and 5-phospho-alpha-D-ribose 1-diphosphate (PRPP) to UMP and diphosphate. The protein is Uracil phosphoribosyltransferase of Solidesulfovibrio magneticus (strain ATCC 700980 / DSM 13731 / RS-1) (Desulfovibrio magneticus).